The primary structure comprises 128 residues: Type-4 ice-structuring protein LS-12 (128 aa).

A signal peptide spans 1 to 20 (MKFSLVATIVLLALAQGSFA). The residue at position 21 (Gln21) is a Pyrrolidone carboxylic acid.

The protein belongs to the apolipoprotein A1/A4/E family.

It localises to the secreted. Its function is as follows. Antifreeze proteins lower the blood freezing point. The protein is Type-4 ice-structuring protein LS-12 of Myoxocephalus octodecemspinosus (Longhorn sculpin).